The primary structure comprises 666 residues: MSDSHLTAFDKASKAGFIIALGIVYGDIGTSPLYTIQSLVENQGGVNQVSESFILGSISLIIWTLTLITTIKYVLIALKADNHHEGGIFSLFTLVRKMSPWLIIPAMIGGATLLSDGALTPAVTVTSAIEGLKAVPGLSHIYQNQTNVIITTLVILIVLFGIQRFGTGFIGKIFGPVMFIWFSFLGVSGFFNTLGHLEIFKAINPYYALHLLFSPENHRGIFILGSIFLATTGAEALYSDLGHVGRGNIYVSWPFVKMCIVLSYCGQAAWILANKHSGIELNPFFASVPSQLRVYLVSLATLAAIIASQALISGSFTLVSEAMRLKIFPLFRVTYPGANLGQLYIPVINWILFAVTSCTVLAFRTSAHMEAAYGLAITITMLMTTILLKYYLIKKGTRPILAHLVMAFFALVEFIFFLASAIKFMHGGYAVVILALAIVFVMFIWHAGTRIVFKYVKSLNLNDYKEQIKQLRDDVCFDLYQTNVVYLSNRMQDHMIDRSILYSILDKRPKRAQVYWFVNVQVTDEPYTAKYKVDMMGTDYMVRVNLYLGFRMPQTVPRYLRTIVQDLMESGRLPKQEQEYTITPGRDVGDFRFVLIEERVSNARQLSNFERFIMQTKASIKHVTASPMRWFGLQYSEVTLEVVPLILSDVLKLPIKELVPVEDSEA.

A run of 12 helical transmembrane segments spans residues G16–I36, I58–L78, P100–T120, I141–G161, F165–L185, I221–L241, W253–A273, V294–G314, L343–F363, Y373–I393, P399–A419, and F424–I444.

Belongs to the HAK/KUP transporter (TC 2.A.72) family.

The protein localises to the cell membrane. It carries out the reaction K(+)(in) + H(+)(in) = K(+)(out) + H(+)(out). In terms of biological role, transport of potassium into the cell. Likely operates as a K(+):H(+) symporter. This is Probable potassium transport system protein Kup from Streptococcus pyogenes serotype M1.